The sequence spans 234 residues: HTH-type transcriptional regulator MT1864 (234 aa).

In terms of domain architecture, HTH tetR-type spans 15–75 (EQIEAKIVEL…LLLVDAYSDL (61 aa)). A DNA-binding region (H-T-H motif) is located at residues 38–57 (SLRAIARNLGMVSSAVYRYV).

Homodimer.

It is found in the cytoplasm. Its function is as follows. May participate in the regulatory network that controls the expression of MmpL lipid transporters. This Mycobacterium tuberculosis (strain CDC 1551 / Oshkosh) protein is HTH-type transcriptional regulator MT1864.